A 266-amino-acid chain; its full sequence is Zinc transporter ZupT (266 aa).

8 helical membrane passes run Leu8 to Val28, Phe35 to Ile55, His70 to Ile90, Gly123 to Phe143, Gly152 to Val172, Phe185 to Leu205, Phe209 to Ile229, and Ile246 to Ala266. Residues Asn134 and Glu137 each contribute to the Fe(2+) site. 2 residues coordinate Zn(2+): Glu137 and His162. Residues Asn163, Glu166, and Glu195 each contribute to the Fe(2+) site. Glu166 is a Zn(2+) binding site.

This sequence belongs to the ZIP transporter (TC 2.A.5) family. ZupT subfamily.

The protein resides in the cell inner membrane. It carries out the reaction Zn(2+)(in) = Zn(2+)(out). In terms of biological role, mediates zinc uptake. May also transport other divalent cations. The protein is Zinc transporter ZupT of Chlorobium limicola (strain DSM 245 / NBRC 103803 / 6330).